A 399-amino-acid chain; its full sequence is Imidazolonepropionase (399 aa).

Histidine 74 and histidine 76 together coordinate Fe(3+). Histidine 74 and histidine 76 together coordinate Zn(2+). 4-imidazolone-5-propanoate is bound by residues arginine 83, tyrosine 146, and histidine 176. Position 146 (tyrosine 146) interacts with N-formimidoyl-L-glutamate. Histidine 238 provides a ligand contact to Fe(3+). Histidine 238 provides a ligand contact to Zn(2+). 4-imidazolone-5-propanoate is bound at residue glutamine 241. A Fe(3+)-binding site is contributed by aspartate 312. Aspartate 312 serves as a coordination point for Zn(2+). The N-formimidoyl-L-glutamate site is built by asparagine 314 and glycine 316. Residue serine 317 participates in 4-imidazolone-5-propanoate binding.

Belongs to the metallo-dependent hydrolases superfamily. HutI family. Requires Zn(2+) as cofactor. It depends on Fe(3+) as a cofactor.

The protein resides in the cytoplasm. The enzyme catalyses 4-imidazolone-5-propanoate + H2O = N-formimidoyl-L-glutamate. Its pathway is amino-acid degradation; L-histidine degradation into L-glutamate; N-formimidoyl-L-glutamate from L-histidine: step 3/3. Catalyzes the hydrolytic cleavage of the carbon-nitrogen bond in imidazolone-5-propanoate to yield N-formimidoyl-L-glutamate. It is the third step in the universal histidine degradation pathway. The protein is Imidazolonepropionase of Deinococcus deserti (strain DSM 17065 / CIP 109153 / LMG 22923 / VCD115).